Here is a 224-residue protein sequence, read N- to C-terminus: Myogenin (224 aa).

A phosphoserine; by CaMK2G mark is found at Ser77 and Ser79. One can recognise a bHLH domain in the interval 81 to 132 (DRRRAATLREKRRLKKVNEAFEALKRSTLLNPNQRLPKVEILRSAIQYIERL). A Phosphothreonine; by CaMK2G modification is found at Thr87.

As to quaternary structure, homodimer and heterodimer with E12; heterodimerization enhances MYOG DNA-binding and transcriptional activities. Interacts with SMARCA4/BRG1/BAF190A. Interacts (via C-terminal region) with SSRP1 and SUPT16H; the interaction is indicative of an interaction with the FACT complex. Interacts with CSRP3. Post-translationally, phosphorylated by CAMK2G on threonine and serine amino acids in a muscle activity-dependent manner. Phosphorylation of Thr-87 impairs both DNA-binding and trans-activation functions in contracting muscles.

The protein resides in the nucleus. Acts as a transcriptional activator that promotes transcription of muscle-specific target genes and plays a role in muscle differentiation, cell cycle exit and muscle atrophy. Essential for the development of functional embryonic skeletal fiber muscle differentiation. However is dispensable for postnatal skeletal muscle growth; phosphorylation by CAMK2G inhibits its transcriptional activity in respons to muscle activity. Required for the recruitment of the FACT complex to muscle-specific promoter regions, thus promoting gene expression initiation. During terminal myoblast differentiation, plays a role as a strong activator of transcription at loci with an open chromatin structure previously initiated by MYOD1. Together with MYF5 and MYOD1, co-occupies muscle-specific gene promoter core regions during myogenesis. Also cooperates with myocyte-specific enhancer factor MEF2D and BRG1-dependent recruitment of SWI/SNF chromatin-remodeling enzymes to alter chromatin structure at myogenic late gene promoters. Facilitates cell cycle exit during terminal muscle differentiation through the up-regulation of miR-20a expression, which in turn represses genes involved in cell cycle progression. Binds to the E-box containing (E1) promoter region of the miR-20a gene. Also plays a role in preventing reversal of muscle cell differentiation. Contributes to the atrophy-related gene expression in adult denervated muscles. Induces fibroblasts to differentiate into myoblasts. This chain is Myogenin (MYOG), found in Homo sapiens (Human).